The chain runs to 145 residues: MSQKAIKGYINLIIPAAGATPAPPIGPALGQRKVNIAAFCKDFNDATQGMEKGIPLPTVITVYEDSSFSFKIKTPPAAYFLKKYAKITKGSSSTKKEAVVGKVTMDDCREIAKLKMPDLNTKNIEAATKIICGSAASMGLEVVGN.

The protein belongs to the universal ribosomal protein uL11 family. As to quaternary structure, part of the ribosomal stalk of the 50S ribosomal subunit. Interacts with L10 and the large rRNA to form the base of the stalk. L10 forms an elongated spine to which L12 dimers bind in a sequential fashion forming a multimeric L10(L12)X complex. In terms of processing, one or more lysine residues are methylated.

In terms of biological role, forms part of the ribosomal stalk which helps the ribosome interact with GTP-bound translation factors. The sequence is that of Large ribosomal subunit protein uL11 from Rickettsia peacockii (strain Rustic).